Consider the following 466-residue polypeptide: Vimentin (466 aa).

Low complexity predominate over residues 1–13; that stretch reads MSTRSVSSSSYRR. The disordered stretch occupies residues 1-31; the sequence is MSTRSVSSSSYRRMFGGPGTASRPSSTRSYV. Residue Ser2 is modified to N-acetylserine. Residues 2-95 are head; sequence STRSVSSSSY…FSLADAINTE (94 aa). Position 5 is a phosphoserine (Ser5). Residue Ser7 is modified to Phosphoserine; by PKA and PKC; alternate. O-linked (GlcNAc) serine; alternate glycosylation is present at Ser7. Residue Ser8 is modified to Phosphoserine. Phosphoserine; by PKC occurs at positions 9 and 10. Thr20 carries the phosphothreonine modification. Ser25 bears the Phosphoserine; by PKA and PKC mark. Ser26 is modified (phosphoserine; by PKC). An O-linked (GlcNAc) threonine glycan is attached at Thr33. The O-linked (GlcNAc) serine; alternate glycan is linked to Ser34. The residue at position 34 (Ser34) is a Phosphoserine; by PKC; alternate. A Phosphoserine; by CaMK2, PKA, PKC and ROCK2 modification is found at Ser39. Phosphoserine; by PKC is present on Ser42. Ser49 is subject to Phosphoserine. Tyr53 bears the Phosphotyrosine mark. Ser55 is subject to Phosphoserine. Ser56 carries the post-translational modification Phosphoserine; by CDK5 and CDK1. Phosphotyrosine is present on Tyr61. Ser66 is modified (phosphoserine; by PKA and PKC). Phosphoserine; by AURKB and ROCK2 is present on Ser72. Ser83 carries the post-translational modification Phosphoserine; by CaMK2. Residue Ser87 is modified to Phosphoserine. The coil 1A stretch occupies residues 96 to 131; that stretch reads FKNTRTNEKVELQELNDRFANYIDKVRFLEQQNKIL. Residues 96 to 131 are a coiled coil; sequence FKNTRTNEKVELQELNDRFANYIDKVRFLEQQNKIL. In terms of domain architecture, IF rod spans 103–411; it reads EKVELQELND…KLLEGEESRI (309 aa). Lys104 participates in a covalent cross-link: Glycyl lysine isopeptide (Lys-Gly) (interchain with G-Cter in SUMO2). Tyr117 carries the post-translational modification Phosphotyrosine. N6-acetyllysine; alternate is present on residues Lys120, Lys129, and Lys139. An N6-succinyllysine; alternate mark is found at Lys120 and Lys129. Glycyl lysine isopeptide (Lys-Gly) (interchain with G-Cter in SUMO2); alternate cross-links involve residues Lys120, Lys129, and Lys139. The interval 132-153 is linker 1; sequence LAELEQLKGQGKSRLGDLYEEE. Position 144 is a phosphoserine (Ser144). Positions 154 to 245 form a coiled coil; sequence MRELRRQVDQ…KLHDEEIQEL (92 aa). The coil 1B stretch occupies residues 154–245; that stretch reads MRELRRQVDQ…KLHDEEIQEL (92 aa). Lys168 carries the N6-acetyllysine modification. Lys188 carries the post-translational modification N6-acetyllysine; alternate. Lys188 is subject to N6-succinyllysine; alternate. Phosphoserine is present on Ser214. Lys223 carries the post-translational modification N6-acetyllysine; alternate. Lys223 is covalently cross-linked (Glycyl lysine isopeptide (Lys-Gly) (interchain with G-Cter in SUMO2); alternate). Ser226 is modified (phosphoserine). Lys235 carries the post-translational modification N6-acetyllysine. Residues 246 to 268 form a linker 12 region; it reads QAQIQEQHVQIDMDVSKPDLTAA. Residue Lys262 forms a Glycyl lysine isopeptide (Lys-Gly) (interchain with G-Cter in SUMO2) linkage. The segment at 269-407 is coil 2; that stretch reads LRDVRQQYES…ATYRKLLEGE (139 aa). The residue at position 294 (Lys294) is an N6-acetyllysine; alternate. Position 294 is an N6-succinyllysine; alternate (Lys294). Lys294 participates in a covalent cross-link: Glycyl lysine isopeptide (Lys-Gly) (interchain with G-Cter in SUMO2); alternate. Ser299 is modified (phosphoserine). Residues 303–407 adopt a coiled-coil conformation; sequence NRNNDALRQA…ATYRKLLEGE (105 aa). Residue Lys313 forms a Glycyl lysine isopeptide (Lys-Gly) (interchain with G-Cter in SUMO2) linkage. The [IL]-x-C-x-x-[DE] motif signature appears at 326-329; it reads LTCE. Lys373 is modified (N6-acetyllysine; alternate). Lys373 participates in a covalent cross-link: Glycyl lysine isopeptide (Lys-Gly) (interchain with G-Cter in SUMO2); alternate. Positions 408–466 are tail; that stretch reads ESRISLPLPNFSSLNLRETNLDSLPLVDTHSKRTLLIKTVETRDGQVINETSQHHDDLE. Phosphoserine is present on residues Ser409, Ser412, Ser419, and Ser420. Thr426 carries the post-translational modification Phosphothreonine. A Phosphoserine modification is found at Ser430. The residue at position 436 (Thr436) is a Phosphothreonine. Ser438 is modified (phosphoserine). Residue Lys439 forms a Glycyl lysine isopeptide (Lys-Gly) (interchain with G-Cter in SUMO2) linkage. The residue at position 445 (Lys445) is an N6-acetyllysine; alternate. Residue Lys445 is modified to N6-succinyllysine; alternate. Lys445 is covalently cross-linked (Glycyl lysine isopeptide (Lys-Gly) (interchain with G-Cter in SUMO2); alternate). Lys445 participates in a covalent cross-link: Glycyl lysine isopeptide (Lys-Gly) (interchain with G-Cter in SUMO1); alternate. Phosphothreonine is present on residues Thr446 and Thr458. Ser459 bears the Phosphoserine mark.

The protein belongs to the intermediate filament family. In terms of assembly, homomer assembled from elementary dimers. Identified in complexes that contain VIM, EZR, AHNAK, BFSP1, BFSP2, ANK2, PLEC, PRX and spectrin. Interacts with BCAS3. Interacts with LGSN. Interacts with SYNM. Interacts (via rod region) with PLEC (via CH 1 domain). Interacts with STK33. Interacts with LARP6. Interacts with RAB8B. Interacts with TOR1A; the interaction associates TOR1A with the cytoskeleton. Interacts with TOR1AIP1. Interacts with TOR1AIP1. Interacts with DIAPH1. Interacts with EPPK1; interaction is dependent of higher-order structure of intermediate filament. Interacts with the non-receptor tyrosine kinase SRMS; the interaction leads to phosphorylation of VIM. Interacts with NOD2. Interacts (via head region) with CORO1C. Interacts with HDGF. Interacts with PRKCE (via phorbol-ester/DAG-type 2 domain). Interacts with BFSP2. Interacts with PPL. Interacts with PKP1 and PKP2. Interacts with SCRIB (via PDZ domains); the interaction protects SCRIB from proteasomal degradation and facilitates SCRIB localization to intermediate filaments, the interaction is reduced by cell contact inhibition. One of the most prominent phosphoproteins in various cells of mesenchymal origin. Phosphorylation is enhanced during cell division, at which time vimentin filaments are significantly reorganized. Phosphorylation by PKN1 inhibits the formation of filaments. Filament disassembly during mitosis is promoted by phosphorylation at Ser-55 as well as by nestin. Phosphorylated at Ser-56 by CDK5 during neutrophil secretion in the cytoplasm. Phosphorylated by STK33. Phosphorylated on tyrosine residues by SRMS. Post-translationally, S-nitrosylation is induced by interferon-gamma and oxidatively-modified low-densitity lipoprotein (LDL(ox)) possibly implicating the iNOS-S100A8/9 transnitrosylase complex.

It is found in the cytoplasm. Its subcellular location is the cytoskeleton. The protein resides in the nucleus matrix. The protein localises to the cell membrane. Its function is as follows. Vimentins are class-III intermediate filaments found in various non-epithelial cells, especially mesenchymal cells. Vimentin is attached to the nucleus, endoplasmic reticulum, and mitochondria, either laterally or terminally. Plays a role in cell directional movement, orientation, cell sheet organization and Golgi complex polarization at the cell migration front. Protects SCRIB from proteasomal degradation and facilitates its localization to intermediate filaments in a cell contact-mediated manner. Involved with LARP6 in the stabilization of type I collagen mRNAs for CO1A1 and CO1A2. The protein is Vimentin (VIM) of Bos taurus (Bovine).